The sequence spans 189 residues: Leucine repeat adapter protein 25 (189 aa).

Residue Ser28 is modified to Phosphoserine. Residues 54 to 83 (ELSRAARAPDGPRHAAGAANAGPAAGPRRP) form a disordered region. Positions 67–83 (HAAGAANAGPAAGPRRP) are enriched in low complexity. One copy of the LRR repeat lies at 86–114 (LDSALAALRKEMVGLRQLDMSLLCQLWGL). The interval 141 to 175 (DSSYPPDAGLSDDEEPPDASLPPDPPPLTVPQTHN) is disordered. The span at 159-169 (ASLPPDPPPLT) shows a compositional bias: pro residues. Ser188 is subject to Phosphoserine.

Belongs to the FAM89 family. In terms of assembly, interacts with SKI. Interacts (via LRR repeat) with CDC42BPA (via AGC-kinase C-terminal domain), CDC42BPB (via AGC-kinase C-terminal domain) and LIMK1 (via LIM zinc-binding domains). Forms a tripartite complex with CDC42BPA, CDC42BPB and LIMK1.

The protein resides in the cytoplasm. Its subcellular location is the cell projection. It localises to the lamellipodium. Its function is as follows. Negatively regulates TGF-beta-induced signaling; in cooperation with SKI prevents the translocation of SMAD2 from the nucleus to the cytoplasm in response to TGF-beta. Acts as an adapter that mediates the specific recognition of LIMK1 by CDC42BPA and CDC42BPB in the lamellipodia. LRAP25-mediated CDC42BPA/CDC42BPB targeting to LIMK1 and the lamellipodium results in LIMK1 activation and the subsequent phosphorylation of CFL1 which is important for lamellipodial F-actin regulation. The polypeptide is Leucine repeat adapter protein 25 (FAM89B) (Homo sapiens (Human)).